Here is a 197-residue protein sequence, read N- to C-terminus: Small ribosomal subunit protein uS4 (197 aa).

The S4 RNA-binding domain occupies 94–158; that stretch reads RRLDNVIYRF…LKKYLYDYKN (65 aa).

This sequence belongs to the universal ribosomal protein uS4 family. Part of the 30S ribosomal subunit. Contacts protein S5. The interaction surface between S4 and S5 is involved in control of translational fidelity.

Its function is as follows. One of the primary rRNA binding proteins, it binds directly to 16S rRNA where it nucleates assembly of the body of the 30S subunit. In terms of biological role, with S5 and S12 plays an important role in translational accuracy. This chain is Small ribosomal subunit protein uS4 (rpsD), found in Carsonella ruddii (strain PV).